Here is a 574-residue protein sequence, read N- to C-terminus: 2-succinyl-5-enolpyruvyl-6-hydroxy-3-cyclohexene-1-carboxylate synthase (574 aa).

It belongs to the TPP enzyme family. MenD subfamily. As to quaternary structure, homodimer. It depends on Mg(2+) as a cofactor. The cofactor is Mn(2+). Thiamine diphosphate is required as a cofactor.

It catalyses the reaction isochorismate + 2-oxoglutarate + H(+) = 5-enolpyruvoyl-6-hydroxy-2-succinyl-cyclohex-3-ene-1-carboxylate + CO2. It participates in quinol/quinone metabolism; 1,4-dihydroxy-2-naphthoate biosynthesis; 1,4-dihydroxy-2-naphthoate from chorismate: step 2/7. The protein operates within cofactor biosynthesis; phylloquinone biosynthesis. Its function is as follows. Catalyzes the thiamine diphosphate-dependent decarboxylation of 2-oxoglutarate and the subsequent addition of the resulting succinic semialdehyde-thiamine pyrophosphate anion to isochorismate to yield 2-succinyl-5-enolpyruvyl-6-hydroxy-3-cyclohexene-1-carboxylate (SEPHCHC). The chain is 2-succinyl-5-enolpyruvyl-6-hydroxy-3-cyclohexene-1-carboxylate synthase from Synechococcus sp. (strain RCC307).